A 125-amino-acid chain; its full sequence is Holo-[acyl-carrier-protein] synthase (125 aa).

Mg(2+) is bound by residues Asp-8 and Glu-57.

It belongs to the P-Pant transferase superfamily. AcpS family. Requires Mg(2+) as cofactor.

The protein localises to the cytoplasm. The enzyme catalyses apo-[ACP] + CoA = holo-[ACP] + adenosine 3',5'-bisphosphate + H(+). In terms of biological role, transfers the 4'-phosphopantetheine moiety from coenzyme A to a Ser of acyl-carrier-protein. The protein is Holo-[acyl-carrier-protein] synthase of Nitrosomonas eutropha (strain DSM 101675 / C91 / Nm57).